The chain runs to 288 residues: Glucose-1-phosphate thymidylyltransferase (288 aa).

DTDP-alpha-D-glucose is bound at residue Gly8. DTTP-binding residues include Gly8, Gly11, Thr12, Arg13, Lys23, Gln24, Gln80, Gly85, and Asp108. Lys23, Gln24, Gln80, Gly85, Asp108, Asn109, Gly143, Glu158, Lys159, Val169, and Asp222 together coordinate dTDP-alpha-D-glucose. Asp108 lines the Mg(2+) pocket. Residue Asp222 coordinates Mg(2+).

The protein belongs to the glucose-1-phosphate thymidylyltransferase family. Mg(2+) serves as cofactor.

It catalyses the reaction dTTP + alpha-D-glucose 1-phosphate + H(+) = dTDP-alpha-D-glucose + diphosphate. Its pathway is carbohydrate biosynthesis; dTDP-L-rhamnose biosynthesis. In terms of biological role, catalyzes the conversion of glucose-1-phosphate and dTTP to dTDP-glucose and pyrophosphate. Involved in the biosynthesis of the dTDP-L-rhamnose which is a component of the critical linker, D-N-acetylglucosamine-L-rhamnose disaccharide, which connects the galactan region of arabinogalactan to peptidoglycan via a phosphodiester linkage. This chain is Glucose-1-phosphate thymidylyltransferase (rmlA), found in Mycobacterium tuberculosis (strain CDC 1551 / Oshkosh).